A 126-amino-acid polypeptide reads, in one-letter code: Holo-[acyl-carrier-protein] synthase (126 aa).

Mg(2+) is bound by residues D9 and E57.

This sequence belongs to the P-Pant transferase superfamily. AcpS family. Mg(2+) serves as cofactor.

Its subcellular location is the cytoplasm. The enzyme catalyses apo-[ACP] + CoA = holo-[ACP] + adenosine 3',5'-bisphosphate + H(+). In terms of biological role, transfers the 4'-phosphopantetheine moiety from coenzyme A to a Ser of acyl-carrier-protein. This is Holo-[acyl-carrier-protein] synthase from Pseudoalteromonas atlantica (strain T6c / ATCC BAA-1087).